Here is a 776-residue protein sequence, read N- to C-terminus: Kinesin-like protein KLP1 (776 aa).

In terms of domain architecture, Kinesin motor spans 5 to 335 (AVKVFVRTRP…LRFASRVRTL (331 aa)). 91-98 (GQTGAGKT) is an ATP binding site. A coiled-coil region spans residues 348-371 (ALLLRRYERQIKELKAELAMRDTL). A disordered region spans residues 441-535 (RRATEEGSGA…SNWGDAGPLS (95 aa)). A compositionally biased stretch (low complexity) spans 447 to 460 (GSGAAARGGDSAGP). A coiled-coil region spans residues 579–657 (ALADTKASIR…SLKSAREELE (79 aa)). The tract at residues 658–776 (PQIQAVAVAR…TQAVNRGLAR (119 aa)) is globular.

The protein belongs to the TRAFAC class myosin-kinesin ATPase superfamily. Kinesin family.

It localises to the cytoplasm. The protein localises to the cytoskeleton. It is found in the flagellum axoneme. In terms of biological role, may play a role in rotation or twisting of the central pair microtubules of the flagella axoneme. In Chlamydomonas reinhardtii (Chlamydomonas smithii), this protein is Kinesin-like protein KLP1 (KLP1).